A 311-amino-acid chain; its full sequence is tRNA dimethylallyltransferase (311 aa).

ATP is bound at residue 8 to 15 (GPTGVGKS). Position 10–15 (10–15 (TGVGKS)) interacts with substrate.

It belongs to the IPP transferase family. As to quaternary structure, monomer. Mg(2+) is required as a cofactor.

It carries out the reaction adenosine(37) in tRNA + dimethylallyl diphosphate = N(6)-dimethylallyladenosine(37) in tRNA + diphosphate. Functionally, catalyzes the transfer of a dimethylallyl group onto the adenine at position 37 in tRNAs that read codons beginning with uridine, leading to the formation of N6-(dimethylallyl)adenosine (i(6)A). The sequence is that of tRNA dimethylallyltransferase from Mycobacterium leprae (strain Br4923).